We begin with the raw amino-acid sequence, 236 residues long: Class B acid phosphatase (236 aa).

A signal peptide spans 1–23 (MRKLTLTLSALALALSLNSVADA). The Nucleophile role is filled by Asp-68. Mg(2+)-binding residues include Asp-68 and Asp-70. Catalysis depends on Asp-70, which acts as the Proton donor. Residues 136–137 (TG) and Lys-176 contribute to the substrate site. Mg(2+) is bound at residue Asp-191.

It belongs to the class B bacterial acid phosphatase family. As to quaternary structure, homotetramer. Requires Mg(2+) as cofactor.

The protein localises to the periplasm. It carries out the reaction a phosphate monoester + H2O = an alcohol + phosphate. Its activity is regulated as follows. Activated by ethanol. Also activated by Co(2+), Zn(2+) and glycerol. Inhibited by EDTA, inorganic phosphate, nucleosides and Ca(2+). Unaffected by fluoride and tartrate. Its function is as follows. Dephosphorylates several organic phosphate monoesters including 5'-AMP, 3'-AMP, pNPP, PDP, 5'-UMP, 3'-UMP, G2P, glucose 6-P and ribose 5-P. No activity toward organic phosphate diesters. Also has a phosphotransferase activity catalyzing the transfer of low-energy phosphate groups from organic phosphate monoesters to free hydroxyl groups of various organic compounds. This is Class B acid phosphatase (aphA) from Morganella morganii (Proteus morganii).